Consider the following 322-residue polypeptide: NADH oxidoreductase HCR (322 aa).

One can recognise an FAD-binding FR-type domain in the interval 7–107; it reads QCPWRMQVHH…SDAMGEFTCD (101 aa). Residues 111-213 are oxidoreductase; sequence EDKFLLLAAG…APYMDWVEQE (103 aa). The 2Fe-2S ferredoxin-type domain maps to 237-322; that stretch reads SGLKFTKLQP…CHPQGDLVLA (86 aa). [2Fe-2S] cluster is bound by residues Cys273, Cys278, Cys281, and Cys311.

In the N-terminal section; belongs to the FAD-binding oxidoreductase type 6 family. It depends on [2Fe-2S] cluster as a cofactor. Requires FAD as cofactor.

NADH oxidoreductase acting in concert with HCP. This Escherichia coli (strain K12) protein is NADH oxidoreductase HCR (hcr).